Reading from the N-terminus, the 141-residue chain is uncharacterized protein (141 aa).

Residues 1–61 form a disordered region; the sequence is IRLLHSLTPP…PPPPPPPRRA (61 aa). The segment covering 8-58 has biased composition (pro residues); it reads TPPPPPPPPPPPPPPPPPPPPPPPPPPPPPPPPPPPPPPPPPPPPPPPPPP. The segment at residues 98 to 116 is a DNA-binding region (H-T-H motif); it reads KRLLVAYPVRHFLSAACQF.

This is an uncharacterized protein from Owenia fusiformis (Polychaete worm).